The chain runs to 377 residues: Succinyl-diaminopimelate desuccinylase (377 aa).

Zn(2+) is bound at residue H66. The active site involves D68. A Zn(2+)-binding site is contributed by D99. E133 (proton acceptor) is an active-site residue. Zn(2+) is bound by residues E134, E162, and H348.

Belongs to the peptidase M20A family. DapE subfamily. As to quaternary structure, homodimer. Requires Zn(2+) as cofactor. The cofactor is Co(2+).

It catalyses the reaction N-succinyl-(2S,6S)-2,6-diaminopimelate + H2O = (2S,6S)-2,6-diaminopimelate + succinate. Its pathway is amino-acid biosynthesis; L-lysine biosynthesis via DAP pathway; LL-2,6-diaminopimelate from (S)-tetrahydrodipicolinate (succinylase route): step 3/3. In terms of biological role, catalyzes the hydrolysis of N-succinyl-L,L-diaminopimelic acid (SDAP), forming succinate and LL-2,6-diaminopimelate (DAP), an intermediate involved in the bacterial biosynthesis of lysine and meso-diaminopimelic acid, an essential component of bacterial cell walls. The polypeptide is Succinyl-diaminopimelate desuccinylase (Chromobacterium violaceum (strain ATCC 12472 / DSM 30191 / JCM 1249 / CCUG 213 / NBRC 12614 / NCIMB 9131 / NCTC 9757 / MK)).